The sequence spans 301 residues: GTPase Era (301 aa).

The Era-type G domain maps to 7–175 (YCGFIAIVGR…AAIVRKHLPE (169 aa)). Residues 15–22 (GRPNVGKS) form a G1 region. 15–22 (GRPNVGKS) contributes to the GTP binding site. Residues 41 to 45 (QTTRH) form a G2 region. Residues 62–65 (DTPG) form a G3 region. GTP contacts are provided by residues 62-66 (DTPGL) and 124-127 (NKVD). The segment at 124–127 (NKVD) is G4. Residues 154-156 (ISA) are G5. In terms of domain architecture, KH type-2 spans 206 to 283 (LGAELPYSVT…HLELWVKVKS (78 aa)).

It belongs to the TRAFAC class TrmE-Era-EngA-EngB-Septin-like GTPase superfamily. Era GTPase family. As to quaternary structure, monomer.

Its subcellular location is the cytoplasm. The protein resides in the cell inner membrane. Functionally, an essential GTPase that binds both GDP and GTP, with rapid nucleotide exchange. Plays a role in 16S rRNA processing and 30S ribosomal subunit biogenesis and possibly also in cell cycle regulation and energy metabolism. The polypeptide is GTPase Era (Escherichia coli (strain K12 / DH10B)).